Reading from the N-terminus, the 1076-residue chain is Serine/threonine-protein phosphatase 6 regulatory ankyrin repeat subunit C (1076 aa).

28 ANK repeats span residues 7–36, 40–69, 73–102, 106–135, 139–168, 172–201, 205–234, 238–267, 271–301, 305–334, 338–367, 371–400, 422–451, 455–484, 488–545, 549–579, 584–613, 617–646, 651–680, 687–716, 720–749, 753–782, 790–819, 822–852, 857–886, 890–920, 924–953, and 960–989; these read TDQPPLVQAIFSRDVEEVRSLLSQKENINV, ERRTPLHAAAYVGDVPILQLLLMSGANVNA, LWLTPLHRAAASRNEKVLGLLLAHSADVNA, LWQTPLHVAAANRATKCAEALAPLLSSLNV, SGRSALHHAVHSGHLETVNLLLNKGASLNV, KERQPLHWAAFLGHLEVLKLLVARGADLGC, KGYGLLHTAAASGQIEVVKYLLRMGAEIDE, FGNTALHIACYLGQDAVAIELVNAGANVNQ, KGFTPLHVAAVSTNGALCLELLVNNGADVNY, EGKSPLHMAAIHGRFTRSQILIQNGSEIDC, FGNTPLHVAARYGHELLISTLMTNGADTAR, HDMFPLHLAVLFGFSDCCRKLLSSGQLYSI, LGRTCLHAAASGGNVECLNLLLSSGADLRR, FGRTPLHYAAANGSYQCAVTLVTAGAGVNE, KGCS…DPSL, QGYTAVHYAAAYGNRQNLELLLEMSFNCLED, IPVSPLHLAAYNGHCEALKTLAETLVNLDV, KGRTALFLATERGSTECVEVLTAHGASALI, RKWTPLHAAAASGHTDSLHLLIDSGERADI, YGQTPLMLAIMNGHVDCVHLLLEKGSTADA, RGRTALHRGAVTGCEDCLAALLDHDAFVLC, KGRTPIHLASACGHTAVLRTLLQAALSTDP, SGYSPMHWASYTGHEDCLELLLEHSPFSYL, NPFTPLHCAVINNQDSTTEMLLGALGAKIVN, KGRTPLHAAAFADNVSGLRMLLQHQAEVNA, TGRTALMTAAENGQTAAVEFLLYRGKADLTV, NKNTALHLACSKGHEKCALMILAETQDLGL, and ALQMPLHIAARNGLASVVQALLSHGATVLA. A compositionally biased stretch (basic and acidic residues) spans 502-514; the sequence is YRRAEPHTPSSHD. The interval 502 to 522 is disordered; the sequence is YRRAEPHTPSSHDAEEDEPLK. Ser-1028 and Ser-1075 each carry phosphoserine.

In terms of assembly, protein phosphatase 6 (PP6) holoenzyme is proposed to be a heterotrimeric complex formed by the catalytic subunit, a SAPS domain-containing subunit (PP6R) and an ankyrin repeat-domain containing regulatory subunit (ARS). Interacts with PPP6R1.

Its function is as follows. Putative regulatory subunit of protein phosphatase 6 (PP6) that may be involved in the recognition of phosphoprotein substrates. This is Serine/threonine-protein phosphatase 6 regulatory ankyrin repeat subunit C (ANKRD52) from Homo sapiens (Human).